The sequence spans 410 residues: Replication factor C large subunit (410 aa).

Residue 46-53 (GDPGTGKT) coordinates ATP.

This sequence belongs to the activator 1 small subunits family. RfcL subfamily. Heteromultimer composed of small subunits (RfcS) and large subunits (RfcL).

Its function is as follows. Part of the RFC clamp loader complex which loads the PCNA sliding clamp onto DNA. In Picrophilus torridus (strain ATCC 700027 / DSM 9790 / JCM 10055 / NBRC 100828 / KAW 2/3), this protein is Replication factor C large subunit.